The following is a 119-amino-acid chain: Holo-[acyl-carrier-protein] synthase (119 aa).

2 residues coordinate Mg(2+): D8 and E58.

The protein belongs to the P-Pant transferase superfamily. AcpS family. Mg(2+) is required as a cofactor.

It localises to the cytoplasm. It carries out the reaction apo-[ACP] + CoA = holo-[ACP] + adenosine 3',5'-bisphosphate + H(+). Functionally, transfers the 4'-phosphopantetheine moiety from coenzyme A to a Ser of acyl-carrier-protein. This Oceanobacillus iheyensis (strain DSM 14371 / CIP 107618 / JCM 11309 / KCTC 3954 / HTE831) protein is Holo-[acyl-carrier-protein] synthase.